A 184-amino-acid chain; its full sequence is MLSPVTAKDKKSFIQWFLNHYRLKKRESVWILNYLVNHSDLLANVHFVRDVKYCPRGIMMTSHCSDEVPFRFYKNHLVTTDAEKSFHDIRLNQNESLYVQLNFRKSNQHSYYASVLEENPFIPEDYYLTTDDKETANGLLDYLLFEQKRNKIIFDIDKALDNGDKELFQKLSEKLEKLSSNRQK.

It belongs to the UPF0302 family.

The protein is UPF0302 protein OB1778 of Oceanobacillus iheyensis (strain DSM 14371 / CIP 107618 / JCM 11309 / KCTC 3954 / HTE831).